A 333-amino-acid polypeptide reads, in one-letter code: Porphobilinogen deaminase (333 aa).

Cys255 bears the S-(dipyrrolylmethanemethyl)cysteine mark.

This sequence belongs to the HMBS family. Monomer. It depends on dipyrromethane as a cofactor.

The enzyme catalyses 4 porphobilinogen + H2O = hydroxymethylbilane + 4 NH4(+). It participates in porphyrin-containing compound metabolism; protoporphyrin-IX biosynthesis; coproporphyrinogen-III from 5-aminolevulinate: step 2/4. Functionally, tetrapolymerization of the monopyrrole PBG into the hydroxymethylbilane pre-uroporphyrinogen in several discrete steps. This chain is Porphobilinogen deaminase, found in Burkholderia vietnamiensis (strain G4 / LMG 22486) (Burkholderia cepacia (strain R1808)).